A 90-amino-acid chain; its full sequence is MVKNSFISVIFQEKKEENRGSAEFQIVSFTNKIRRLTSHLELHKKDYLSQRGLRKILGKRQRLLSYLSKTNKIRYKELIGELDIRESKNR.

This sequence belongs to the universal ribosomal protein uS15 family. As to quaternary structure, part of the 30S ribosomal subunit.

It is found in the plastid. Its subcellular location is the chloroplast. This chain is Small ribosomal subunit protein uS15c (rps15), found in Gossypium barbadense (Sea Island cotton).